The chain runs to 450 residues: uncharacterized protein (450 aa).

This sequence belongs to the heat shock protein 70 family.

This is an uncharacterized protein from Escherichia coli (strain K12).